We begin with the raw amino-acid sequence, 236 residues long: Large ribosomal subunit protein uL1 (236 aa).

The protein belongs to the universal ribosomal protein uL1 family. In terms of assembly, part of the 50S ribosomal subunit.

Binds directly to 23S rRNA. The L1 stalk is quite mobile in the ribosome, and is involved in E site tRNA release. In terms of biological role, protein L1 is also a translational repressor protein, it controls the translation of the L11 operon by binding to its mRNA. The protein is Large ribosomal subunit protein uL1 of Kocuria rhizophila (strain ATCC 9341 / DSM 348 / NBRC 103217 / DC2201).